The chain runs to 393 residues: S-adenosylmethionine synthase (393 aa).

Position 16 (His16) interacts with ATP. Asp18 lines the Mg(2+) pocket. A K(+)-binding site is contributed by Glu44. L-methionine contacts are provided by Glu57 and Gln100. The segment at 100-110 (QSPDIVMGVDG) is flexible loop. Residues 165–167 (DAK), 231–232 (RF), Asp240, 246–247 (RK), and Lys267 contribute to the ATP site. Asp240 contacts L-methionine. Lys271 is an L-methionine binding site.

The protein belongs to the AdoMet synthase family. Homotetramer; dimer of dimers. It depends on Mg(2+) as a cofactor. Requires K(+) as cofactor.

It localises to the cytoplasm. It catalyses the reaction L-methionine + ATP + H2O = S-adenosyl-L-methionine + phosphate + diphosphate. The protein operates within amino-acid biosynthesis; S-adenosyl-L-methionine biosynthesis; S-adenosyl-L-methionine from L-methionine: step 1/1. Catalyzes the formation of S-adenosylmethionine (AdoMet) from methionine and ATP. The overall synthetic reaction is composed of two sequential steps, AdoMet formation and the subsequent tripolyphosphate hydrolysis which occurs prior to release of AdoMet from the enzyme. This Coxiella burnetii (strain Dugway 5J108-111) protein is S-adenosylmethionine synthase.